The chain runs to 266 residues: F-box/kelch-repeat protein At4g39560 (266 aa).

One can recognise an F-box domain in the interval 24 to 70; that stretch reads STQILSLPVDLLISILARVSRLDYPILSLVSKSFRSLIASPELYETR. 3 Kelch repeats span residues 130–176, 178–223, and 226–266; these read DIYN…VIDG, IYVA…KSAV, and EAIC…LLVA.

In Arabidopsis thaliana (Mouse-ear cress), this protein is F-box/kelch-repeat protein At4g39560.